A 430-amino-acid chain; its full sequence is Trigger factor (430 aa).

The 86-residue stretch at 163–248 folds into the PPIase FKBP-type domain; it reads GNIAIIDFKG…IKDIKVKELP (86 aa).

It belongs to the FKBP-type PPIase family. Tig subfamily.

The protein resides in the cytoplasm. It carries out the reaction [protein]-peptidylproline (omega=180) = [protein]-peptidylproline (omega=0). In terms of biological role, involved in protein export. Acts as a chaperone by maintaining the newly synthesized protein in an open conformation. Functions as a peptidyl-prolyl cis-trans isomerase. This Clostridium botulinum (strain ATCC 19397 / Type A) protein is Trigger factor.